The primary structure comprises 89 residues: Large ribosomal subunit protein bL27 (89 aa).

The tract at residues 1-22 (MAHKKGASSSRNGRDSNAQRLG) is disordered. Positions 7–19 (ASSSRNGRDSNAQ) are enriched in polar residues.

Belongs to the bacterial ribosomal protein bL27 family.

In Cutibacterium acnes (strain DSM 16379 / KPA171202) (Propionibacterium acnes), this protein is Large ribosomal subunit protein bL27.